The following is an 85-amino-acid chain: UPF0335 protein Atu3758 (85 aa).

This sequence belongs to the UPF0335 family.

In Agrobacterium fabrum (strain C58 / ATCC 33970) (Agrobacterium tumefaciens (strain C58)), this protein is UPF0335 protein Atu3758.